The chain runs to 413 residues: Protein cycle (413 aa).

The interval Met1–Arg43 is disordered. Residues Glu8–Asp19 are compositionally biased toward acidic residues. Residues Glu20–Arg41 are compositionally biased toward basic and acidic residues. The 54-residue stretch at Asn30–Ile83 folds into the bHLH domain. The region spanning Asp104 to Pro175 is the PAS 1 domain. Residues Asn219–Thr242 form a disordered region. Positions Pro297–Pro367 constitute a PAS 2 domain. The PAC domain maps to Thr372–Leu413.

As to quaternary structure, efficient DNA binding requires dimerization with another bHLH protein. Forms a heterodimer with Clock in order to activate PER and TIM transcription. As to expression, expressed in head and ovary.

It localises to the nucleus. In terms of biological role, putative transcription factor involved in the generation of biological rhythms. Activates cycling transcription of Period (PER) and Timeless (TIM) by binding to the E-box (5'-CACGTG-3') present in their promoters. The sequence is that of Protein cycle (cyc) from Drosophila melanogaster (Fruit fly).